A 157-amino-acid polypeptide reads, in one-letter code: Small ribosomal subunit protein uS7 (157 aa).

It belongs to the universal ribosomal protein uS7 family. In terms of assembly, part of the 30S ribosomal subunit. Contacts proteins S9 and S11.

Its function is as follows. One of the primary rRNA binding proteins, it binds directly to 16S rRNA where it nucleates assembly of the head domain of the 30S subunit. Is located at the subunit interface close to the decoding center, probably blocks exit of the E-site tRNA. This is Small ribosomal subunit protein uS7 from Opitutus terrae (strain DSM 11246 / JCM 15787 / PB90-1).